The sequence spans 104 residues: UPF0145 protein HCH_01985 (104 aa).

Belongs to the UPF0145 family.

The chain is UPF0145 protein HCH_01985 from Hahella chejuensis (strain KCTC 2396).